The chain runs to 117 residues: Large ribosomal subunit protein uL23 (117 aa).

The protein belongs to the universal ribosomal protein uL23 family. Part of the 50S ribosomal subunit. Contacts protein L29, and trigger factor when it is bound to the ribosome.

In terms of biological role, one of the early assembly proteins it binds 23S rRNA. One of the proteins that surrounds the polypeptide exit tunnel on the outside of the ribosome. Forms the main docking site for trigger factor binding to the ribosome. This chain is Large ribosomal subunit protein uL23, found in Ruminiclostridium cellulolyticum (strain ATCC 35319 / DSM 5812 / JCM 6584 / H10) (Clostridium cellulolyticum).